Reading from the N-terminus, the 777-residue chain is Elongation factor G, mitochondrial (777 aa).

In terms of domain architecture, tr-type G spans 34–338 (LRQRNVGISA…GMCAYLPNPM (305 aa)). GTP-binding positions include 43-50 (AHIDSGKT), 136-140 (DTPGH), and 190-193 (NKMD).

The protein belongs to the TRAFAC class translation factor GTPase superfamily. Classic translation factor GTPase family. EF-G/EF-2 subfamily.

It localises to the mitochondrion. It participates in protein biosynthesis; polypeptide chain elongation. Its function is as follows. Mitochondrial GTPase that catalyzes the GTP-dependent ribosomal translocation step during translation elongation. During this step, the ribosome changes from the pre-translocational (PRE) to the post-translocational (POST) state as the newly formed A-site-bound peptidyl-tRNA and P-site-bound deacylated tRNA move to the P and E sites, respectively. Catalyzes the coordinated movement of the two tRNA molecules, the mRNA and conformational changes in the ribosome. This chain is Elongation factor G, mitochondrial, found in Malassezia globosa (strain ATCC MYA-4612 / CBS 7966) (Dandruff-associated fungus).